Reading from the N-terminus, the 922-residue chain is Chaperone protein ClpC, chloroplastic (922 aa).

Residues 1–72 (MARVLAQSLS…RPGLDFHSKV (72 aa)) constitute a chloroplast transit peptide. One can recognise a Clp R domain in the interval 92–234 (FERFTEKAIK…RTQVIRMVGE (143 aa)). Repeat stretches follow at residues 95–160 (FTEK…IGRG) and 170–234 (FTPR…MVGE). The i stretch occupies residues 255 to 502 (LEEYGTNLTK…RVRLQHAQLP (248 aa)). Residue 300–307 (GEPGVGKT) coordinates ATP. The region spanning 509 to 544 (DKEVRKIVKEKEEYVRNQDFEKAGELRDKEMDLKAQ) is the UVR domain. The interval 569–760 (VTEVDIQHIV…LLIMTSNVGS (192 aa)) is II. ATP is bound at residue 643–650 (GPTGVGKS).

It belongs to the ClpA/ClpB family. ClpC subfamily.

The protein localises to the plastid. The protein resides in the chloroplast. Functionally, molecular chaperone that may interact with a ClpP-like protease involved in degradation of denatured proteins in the chloroplast. The polypeptide is Chaperone protein ClpC, chloroplastic (Pisum sativum (Garden pea)).